A 399-amino-acid chain; its full sequence is Tryptophan synthase beta chain (399 aa).

Lysine 90 carries the N6-(pyridoxal phosphate)lysine modification.

The protein belongs to the TrpB family. As to quaternary structure, tetramer of two alpha and two beta chains. It depends on pyridoxal 5'-phosphate as a cofactor.

It catalyses the reaction (1S,2R)-1-C-(indol-3-yl)glycerol 3-phosphate + L-serine = D-glyceraldehyde 3-phosphate + L-tryptophan + H2O. The protein operates within amino-acid biosynthesis; L-tryptophan biosynthesis; L-tryptophan from chorismate: step 5/5. Functionally, the beta subunit is responsible for the synthesis of L-tryptophan from indole and L-serine. This is Tryptophan synthase beta chain from Phocaeicola vulgatus (strain ATCC 8482 / DSM 1447 / JCM 5826 / CCUG 4940 / NBRC 14291 / NCTC 11154) (Bacteroides vulgatus).